The chain runs to 213 residues: MAGAMRKMAVYLGLVEDDGYDGRGFDPDDDFEPELDPEPERDHRRHEPAHQSHGAHQSQRDEEVRVVQPPAQREPMPRAASLAAESSRPARIAPVASITQERASLEKSAPVIMPKVVSEREPYRITTLHPRTYNEARTIGEHFREGTPVIMNLTEMDDTDAKRLVDFAAGLVFGLHGSIERVTQKVFLLSPANVDVTAEDKARIAEGGFFNQS.

Residues 16-89 (EDDGYDGRGF…ASLAAESSRP (74 aa)) are disordered. Residues 27–39 (PDDDFEPELDPEP) are compositionally biased toward acidic residues.

This sequence belongs to the SepF family. As to quaternary structure, homodimer. Interacts with FtsZ.

The protein localises to the cytoplasm. Cell division protein that is part of the divisome complex and is recruited early to the Z-ring. Probably stimulates Z-ring formation, perhaps through the cross-linking of FtsZ protofilaments. Its function overlaps with FtsA. The protein is Cell division protein SepF 2 of Streptomyces coelicolor (strain ATCC BAA-471 / A3(2) / M145).